The following is a 395-amino-acid chain: Multidrug resistance protein MdtL (395 aa).

12 helical membrane-spanning segments follow: residues 4–24, 42–62, 69–89, 93–113, 131–151, 158–178, 217–237, 247–267, 271–291, 295–315, 333–353, and 358–378; these read FLLCSFALVLLYPAGIDMYLV, IAFSVYLAGMATAMLFAGKIA, PVAIVGALVFMMASLLCSRAS, LFLSGRFLQGVGAGGCYVVAF, LLNGITCIVPVLAPVVGHLIM, SLFYTMSAMGIIVGLLSLFIL, VSVILTFVNASPVLLMEVMGF, ALTAGVSMVVSFSTPFALGLF, TLMLVSQGLFLTAGVTLSLAH, VTLFGLTLICAGFSVGFGVAM, LGIAQVCGSSLWIWLAAILGI, and MLIGILIGCSIVSILLIFSVA.

This sequence belongs to the major facilitator superfamily. DHA1 family. MdtL (TC 2.A.1.2.22) subfamily.

The protein resides in the cell inner membrane. The sequence is that of Multidrug resistance protein MdtL from Salmonella agona (strain SL483).